The chain runs to 596 residues: Heat shock factor protein 5 (596 aa).

The DNA-binding element occupies 10–200 (NPNNFPAKLW…FHRSFRRDSL (191 aa)). The tract at residues 541–576 (EMGPASKPSEDTGLATPARYREHRSNSQQGKSPDLH) is disordered. The residue at position 572 (serine 572) is a Phosphoserine.

Belongs to the HSF family. As to quaternary structure, homooligomer.

The protein resides in the nucleus. It localises to the chromosome. In terms of biological role, DNA-binding transcription factor that is essential for male fertility, spermatogenesis and meiotic prophase progression in spermatocytes under non-stress conditions. Positvely and negatively regulates gene expression to ensure progression of meiotic prophase beyond pachytene stage in spermatocytes. Plays a role in male germline meiotic sex chromosome remodeling and silencing through regulation of SMARCA4. The polypeptide is Heat shock factor protein 5 (HSF5) (Homo sapiens (Human)).